Consider the following 163-residue polypeptide: UPF0262 protein RPA4530 (163 aa).

The protein belongs to the UPF0262 family.

This chain is UPF0262 protein RPA4530, found in Rhodopseudomonas palustris (strain ATCC BAA-98 / CGA009).